We begin with the raw amino-acid sequence, 81 residues long: Protein Vpu (81 aa).

Residues 1–7 lie on the Extracellular side of the membrane; that stretch reads MQSLQVL. Residues 8–28 traverse the membrane as a helical segment; that stretch reads AIVALVVATIIAIVVWTIVFI. Topologically, residues 29-81 are cytoplasmic; that stretch reads EYRKILRQRKIDRLINRITERAEDSGNESDGDQEELSALVERGHLAPWDVDDL. The segment at 50 to 81 is disordered; the sequence is AEDSGNESDGDQEELSALVERGHLAPWDVDDL. Residues Ser-53 and Ser-57 each carry the phosphoserine; by host CK2 modification. A compositionally biased stretch (acidic residues) spans 53–63; that stretch reads SGNESDGDQEE.

The protein belongs to the HIV-1 VPU protein family. In terms of assembly, homopentamer. Interacts with host CD4 and BRTC; these interactions induce proteasomal degradation of CD4. Interacts with host BST2; this interaction leads to the degradation of host BST2. Interacts with host FBXW11. Interacts with host AP1M1; this interaction plays a role in the mistrafficking and subsequent degradation of host BST2. Interacts with host RANBP2; this interaction allows Vpu to down-regulate host BLM sumoylation. Post-translationally, phosphorylated by host CK2. This phosphorylation is necessary for interaction with human BTRC and degradation of CD4.

Its subcellular location is the host membrane. Ion channel activity is inhibited by hexamethylene amiloride in vitro. Functionally, enhances virion budding by targeting host CD4 and Tetherin/BST2 to proteasome degradation. Degradation of CD4 prevents any unwanted premature interactions between viral Env and its host receptor CD4 in the endoplasmic reticulum. Degradation of antiretroviral protein Tetherin/BST2 is important for virion budding, as BST2 tethers new viral particles to the host cell membrane. Mechanistically, Vpu bridges either CD4 or BST2 to BTRC, a substrate recognition subunit of the Skp1/Cullin/F-box protein E3 ubiquitin ligase, induces their ubiquitination and subsequent proteasomal degradation. The alteration of the E3 ligase specificity by Vpu seems to promote the degradation of host IKBKB, leading to NF-kappa-B down-regulation and subsequent apoptosis. Acts as a viroporin that forms an oligomeric ion channel in membranes. Modulates the host DNA repair mechanisms to promote degradation of nuclear viral cDNA in cells that are already productively infected in order to suppress immune sensing and proviral hyper-integration (superinfection). Manipulates PML-NBs and modulates SUMOylation of host BLM protein thereby enhancing its DNA-end processing activity toward viral unintegrated linear DNA. Also inhibits RAD52-mediated homologous repair of viral cDNA, preventing the generation of dead-end circular forms of single copies of the long terminal repeat and permitting sustained nucleolytic attack. In Human immunodeficiency virus type 1 group M subtype B (isolate YU-2) (HIV-1), this protein is Protein Vpu.